Consider the following 766-residue polypeptide: Exocyst complex component 6 (766 aa).

A coiled-coil region spans residues 28–90 (NTKQIGDQLE…SLDTSLRQIS (63 aa)).

This sequence belongs to the SEC15 family. In terms of assembly, the exocyst complex is composed of Sec3/Exoc1, Sec5/Exoc2, Sec6/Exoc3, Sec8/Exoc4, Sec10/Exoc5, Sec15/Exoc6, Exo70/Exoc7 and Exo84/Exoc8. Interacts with RAB3, RAB8, RAB11 and RAB27. Detected in developing rhabdomeres in photoreceptor cells.

The protein localises to the cell projection. It localises to the rhabdomere. Component of the exocyst complex involved in the docking of exocytic vesicles with fusion sites on the plasma membrane. The sequence is that of Exocyst complex component 6 from Drosophila melanogaster (Fruit fly).